A 128-amino-acid polypeptide reads, in one-letter code: Large ribosomal subunit protein bL17 (128 aa).

This sequence belongs to the bacterial ribosomal protein bL17 family. As to quaternary structure, part of the 50S ribosomal subunit. Contacts protein L32.

The sequence is that of Large ribosomal subunit protein bL17 from Baumannia cicadellinicola subsp. Homalodisca coagulata.